The following is a 111-amino-acid chain: uncharacterized protein (111 aa).

A helical membrane pass occupies residues 18–41; it reads FFYFFFISFYTLWIVFFLLHLSFF.

The protein resides in the membrane. This is an uncharacterized protein from Saccharomyces cerevisiae (strain ATCC 204508 / S288c) (Baker's yeast).